A 615-amino-acid chain; its full sequence is uncharacterized protein (615 aa).

A Phosphoserine modification is found at S48. A compositionally biased stretch (acidic residues) spans 424-433; sequence DRENELEEGS. A disordered region spans residues 424 to 615; the sequence is DRENELEEGS…YARKKTKKNV (192 aa). Composition is skewed to basic and acidic residues over residues 439 to 476, 484 to 496, 504 to 521, and 529 to 561; these read DNEREVREKETEIDKEVAQGDNEREVGEKETEIDKEVG, DGNKDMELNKEVA, ESEKDKEVTESEKDKEVA, and ESEKDIEVADSEKDKEVPQDDEMDGGKVTEPSK. Composition is skewed to basic residues over residues 579–589 and 606–615; these read KKPKVVKKVAK and YARKKTKKNV.

This is an uncharacterized protein from Arabidopsis thaliana (Mouse-ear cress).